Consider the following 454-residue polypeptide: MSLDIVILAAGQGTRMRSALPKVLHPVAGNSMLGHVVATARQLQPQGIHVVIGHGAERVRERLAADDLNFVLQAEQLGTGHAVAQALPALSAERVLILYGDVPLIEADTLRRLLAQVGPERLALLTVDLVDPSGYGRIVRDAAGRVVAIVEHKDASPEQRAICEGNTGILAVPGARLADWLGRLSNDNVQGEYYLTDVIAMAVADGLTIATEQPQDAMEVQGANDRLQLAQLERHYQSRVARRLMAQGVTLRDPARFDLRGEVEVGRDVLIDVNVILEGKVIIEDGVEIGPNCTIKDSTLRRGAQVKANSHLEGAELGEGADCGPFARLRPGAVLGAKAHVGNFVELKNAVLGEGAKAGHLSYLGDAEIGARTNIGAGTITCNYDGANKFRTVMGEDVFIGSNSALVAPVELGAGATTGAGSVITEDVPAGNLALGRGRQRNIEGWQRPTKQKK.

The pyrophosphorylase stretch occupies residues 1 to 226 (MSLDIVILAA…AMEVQGANDR (226 aa)). Residues 8 to 11 (LAAG), Lys22, Gln73, 78 to 79 (GT), 99 to 101 (YGD), Gly136, Glu151, Asn166, and Asn224 contribute to the UDP-N-acetyl-alpha-D-glucosamine site. Asp101 lines the Mg(2+) pocket. A Mg(2+)-binding site is contributed by Asn224. The linker stretch occupies residues 227-247 (LQLAQLERHYQSRVARRLMAQ). An N-acetyltransferase region spans residues 248-454 (GVTLRDPARF…GWQRPTKQKK (207 aa)). Arg330 and Lys348 together coordinate UDP-N-acetyl-alpha-D-glucosamine. The active-site Proton acceptor is His360. 2 residues coordinate UDP-N-acetyl-alpha-D-glucosamine: Tyr363 and Asn374. Acetyl-CoA contacts are provided by residues Ala377, 383 to 384 (NY), Ser402, Ala420, and Arg437.

The protein in the N-terminal section; belongs to the N-acetylglucosamine-1-phosphate uridyltransferase family. In the C-terminal section; belongs to the transferase hexapeptide repeat family. Homotrimer. Mg(2+) is required as a cofactor.

It localises to the cytoplasm. The enzyme catalyses alpha-D-glucosamine 1-phosphate + acetyl-CoA = N-acetyl-alpha-D-glucosamine 1-phosphate + CoA + H(+). The catalysed reaction is N-acetyl-alpha-D-glucosamine 1-phosphate + UTP + H(+) = UDP-N-acetyl-alpha-D-glucosamine + diphosphate. The protein operates within nucleotide-sugar biosynthesis; UDP-N-acetyl-alpha-D-glucosamine biosynthesis; N-acetyl-alpha-D-glucosamine 1-phosphate from alpha-D-glucosamine 6-phosphate (route II): step 2/2. It participates in nucleotide-sugar biosynthesis; UDP-N-acetyl-alpha-D-glucosamine biosynthesis; UDP-N-acetyl-alpha-D-glucosamine from N-acetyl-alpha-D-glucosamine 1-phosphate: step 1/1. It functions in the pathway bacterial outer membrane biogenesis; LPS lipid A biosynthesis. Catalyzes the last two sequential reactions in the de novo biosynthetic pathway for UDP-N-acetylglucosamine (UDP-GlcNAc). The C-terminal domain catalyzes the transfer of acetyl group from acetyl coenzyme A to glucosamine-1-phosphate (GlcN-1-P) to produce N-acetylglucosamine-1-phosphate (GlcNAc-1-P), which is converted into UDP-GlcNAc by the transfer of uridine 5-monophosphate (from uridine 5-triphosphate), a reaction catalyzed by the N-terminal domain. This Azotobacter vinelandii (strain DJ / ATCC BAA-1303) protein is Bifunctional protein GlmU.